The sequence spans 349 residues: Probable L-asparaginase periplasmic (349 aa).

Residues 1-21 form the signal peptide; the sequence is MKLTKLALCTLFGLGVSIANA. The region spanning 25 to 349 is the Asparaginase/glutaminase domain; sequence PNITILATGG…KVIQQYFEDF (325 aa). T35 (O-isoaspartyl threonine intermediate) is an active-site residue. Substrate-binding positions include S81 and 112–113; that span reads TD. Residues C100 and C128 are joined by a disulfide bond.

Belongs to the asparaginase 1 family.

It is found in the periplasm. It carries out the reaction L-asparagine + H2O = L-aspartate + NH4(+). In Haemophilus influenzae (strain ATCC 51907 / DSM 11121 / KW20 / Rd), this protein is Probable L-asparaginase periplasmic (ansB).